The chain runs to 1266 residues: Intermembrane phospholipid transporter YhdP (1266 aa).

The Cytoplasmic segment spans residues 1–5 (MRRLP). Residues 6 to 26 (GILLLTGAALVVIAALLVSGL) traverse the membrane as a helical segment. The Periplasmic segment spans residues 27 to 1266 (RIALPHLDAW…LRQPRKEKAQ (1240 aa)). The tract at residues 94-103 (VWQSLLHMRW) is P-helix. The tract at residues 1121-1144 (HAGQLLRLLSVDALMRKLRFDFRD) is C-helix_2. A C-helix_1 region spans residues 1203–1237 (ISATVGVAAAFAVNPIVGAAVFAASKVLGPLWSKV).

The protein resides in the cell inner membrane. In terms of biological role, involved in outer membrane lipid homeostasis. Likely transports phospholipids between the inner membrane and the outer membrane. It would provide a bridge-like structure that protects phospholipids as they travel across the periplasm. The phosphate-containing molecules are captured along the length of a hydrophobic groove that is continuous along all but the extreme N-terminus of the protein. It also appears to control, directly or indirectly, levels of cyclic enterobacterial common antigen (cyclic ECA), a soluble cyclic ECA molecule present in the periplasm. Its function is as follows. TamB, YdbH and YhdP are redundant, but not equivalent, in performing an essential function for growth and maintaining lipid homeostasis in the outer membrane. The transport functions of TamB and YhdP could be differentiated according to the fatty acid saturation state of the phospholipids, with TamB transporting more unsaturated phospholipids and YhdP more saturated phospholipids. Any of these three proteins is sufficient for growth. This is Intermembrane phospholipid transporter YhdP (yhdP) from Escherichia coli (strain K12).